The chain runs to 301 residues: Homoserine O-acetyltransferase (301 aa).

Cys-142 acts as the Acyl-thioester intermediate in catalysis. Substrate is bound by residues Lys-163 and Ser-192. The active-site Proton acceptor is His-235. The active site involves Glu-237. Residue Arg-249 coordinates substrate.

The protein belongs to the MetA family.

Its subcellular location is the cytoplasm. It catalyses the reaction L-homoserine + acetyl-CoA = O-acetyl-L-homoserine + CoA. The protein operates within amino-acid biosynthesis; L-methionine biosynthesis via de novo pathway; O-acetyl-L-homoserine from L-homoserine: step 1/1. In terms of biological role, transfers an acetyl group from acetyl-CoA to L-homoserine, forming acetyl-L-homoserine. The protein is Homoserine O-acetyltransferase of Bacillus cytotoxicus (strain DSM 22905 / CIP 110041 / 391-98 / NVH 391-98).